The following is a 446-amino-acid chain: Packaging protein 1 (446 aa).

The tract at residues 1-71 (MEEKAGLGRL…QPQASKPKKH (71 aa)) is disordered. The span at 31–43 (FHSDRNHPNKEAE) shows a compositional bias: basic and acidic residues. 170–177 (GPTGCGKS) lines the ATP pocket. A DNA-binding region spans residues 439 to 446 (RYYHSKKK).

The protein belongs to the adenoviridae packaging protein 1 family. In terms of assembly, homodimer. Part of a genome packaging complex composed of packaging proteins 1, 2 and 3; this complex specifically binds to the packaging sequence on the left end of viral genomic DNA and performs packaging of the viral genome. Interacts with protein 33K.

The protein resides in the virion. It is found in the host nucleus. Its subcellular location is the host nucleoplasm. The protein localises to the host nucleolus. Component of the packaging machinery which encapsidates the viral DNA into preformed capsids and transcriptional activator of the viral major late promoter (MLP). Binds, along with packaging proteins 2 and 3, to the specific packaging sequence on the left end of viral genomic DNA and displays ATPase activity thereby providing the power stroke of the packaging machinery. The activity of packaging protein IVa2 is stimulated by protein 33K which acts as a terminase. May be the protein that pumps DNA into the capsid powered by ATP hydrolysis. Specifically binds to the 5'-CG-3' nucleotides of the repeats making up the packaging sequence. Component of the DEF-A and DEF-B transcription factors that bind downstream elements of the major late promoter (MLP), and stimulate transcription from the MLP after initiation of viral DNA replication. DEF-A is a heterodimer packaging proteins 1 and 2 and DEF-B is a homodimer of packaging protein 1. In Canine adenovirus serotype 2 (strain Toronto A 26-61) (CAdV-2), this protein is Packaging protein 1.